We begin with the raw amino-acid sequence, 500 residues long: Lysine--tRNA ligase (500 aa).

Residues glutamate 410 and glutamate 417 each coordinate Mg(2+).

Belongs to the class-II aminoacyl-tRNA synthetase family. In terms of assembly, homodimer. Requires Mg(2+) as cofactor.

It is found in the cytoplasm. The enzyme catalyses tRNA(Lys) + L-lysine + ATP = L-lysyl-tRNA(Lys) + AMP + diphosphate. The protein is Lysine--tRNA ligase of Pseudomonas putida (strain ATCC 700007 / DSM 6899 / JCM 31910 / BCRC 17059 / LMG 24140 / F1).